The chain runs to 632 residues: MHGLLLAGLAAALPLGVAGLPARQQSGLSPRGIDINAYRFASMAKYSEHKTTSQMVHSFSYSKDDDYVATATKLVKSTFPNMTFRTVKDHYIGTNGIGHVHFKQTAHGIDIDNADFNVNIGRDGKVFTFGNSFFEGEMPKTNPLTKRDFSDPVKALHGAVKTLKIPVKPESAKAMPMKEVETFKFEGTSGALSEPKAKLVYLQKDGNLHLTWRVETDVGDNWLLSYVDAKESETVHNVVDYVASADYKVFAWGLNDPTEGQPTMIKDPWNTTGSGSPFTWHGDGQMDYTVTRGNNVPAQDNPSGGSQWENNYRPESAELSFVYEYSEQMEPEQYKDFAITQLFYTVNTFHDVLYTLGFTEEAGNFQMNNNGKGGQGNDFAICNAQDGSGTNNANFATPPDGQPGRMRMYTWTTAQPSRDGDLEAGIVIHEYTHGLSNRLCGGPANSNCLNELEAGGMGEGWGDFYATAIRLKQGDTHDTDYTMGEWAANQKGGIREYPYSTNMQTNPYTYADVQGMSEVHGIGTVWATILYDVLWNLIDEHGMGKNIMPKFVNGAPTDGRNLAMKLVLDGMTLMPCNPNFMQARDAIIDADQALTNGQNKCALMKAFAKRGLGSNYKHGKNRVNNFDMPAGC.

The first 19 residues, 1–19 (MHGLLLAGLAAALPLGVAG), serve as a signal peptide directing secretion. Residues 20–244 (LPARQQSGLS…VHNVVDYVAS (225 aa)) constitute a propeptide that is removed on maturation. Asn-270 is a glycosylation site (N-linked (GlcNAc...) asparagine). A Zn(2+)-binding site is contributed by His-429. Glu-430 is an active-site residue. His-433 serves as a coordination point for Zn(2+).

This sequence belongs to the peptidase M36 family. It depends on Zn(2+) as a cofactor.

Its subcellular location is the secreted. In terms of biological role, secreted metalloproteinase that allows assimilation of proteinaceous substrates and probably acts as a virulence factor. The chain is Extracellular metalloproteinase 2 (MEP2) from Arthroderma gypseum (strain ATCC MYA-4604 / CBS 118893) (Microsporum gypseum).